Consider the following 147-residue polypeptide: Lysozyme C-1 (147 aa).

The N-terminal stretch at M1 to G18 is a signal peptide. The 129-residue stretch at K19 to L147 folds into the C-type lysozyme domain. 4 cysteine pairs are disulfide-bonded: C24-C145, C48-C133, C83-C99, and C95-C113. Catalysis depends on residues E53 and D71.

Belongs to the glycosyl hydrolase 22 family. As to quaternary structure, monomer. In terms of tissue distribution, stomach-specific.

It catalyses the reaction Hydrolysis of (1-&gt;4)-beta-linkages between N-acetylmuramic acid and N-acetyl-D-glucosamine residues in a peptidoglycan and between N-acetyl-D-glucosamine residues in chitodextrins.. Functionally, lysozymes have primarily a bacteriolytic function; those in tissues and body fluids are associated with the monocyte-macrophage system and enhance the activity of immunoagents. In Bos taurus (Bovine), this protein is Lysozyme C-1 (LYZ1).